The chain runs to 380 residues: E3 ubiquitin-protein ligase Iruka (380 aa).

A disordered region spans residues 50-92 (APEMDSSTAGASGSARSGSSGSGSSGSHDTLSRGSSSSGSQVN). 2 stretches are compositionally biased toward low complexity: residues 55-68 (SSTA…RSGS) and 74-89 (SGSH…SSGS). An RING-type; atypical zinc finger spans residues 253 to 294 (CSICWDDFKIDETVRKLPCSHLYHENCIVPWLNLHSTCPICR). Residues 317 to 367 (EMAADGSNSERRSASTATGTDNPSPANNPSQAAAEGGRTRPDANPAQAARN) form a disordered region. Low complexity predominate over residues 338 to 350 (NPSPANNPSQAAA).

As to quaternary structure, interacts (via N-terminus) with CG7546 (via Ubl domain).

It carries out the reaction S-ubiquitinyl-[E2 ubiquitin-conjugating enzyme]-L-cysteine + [acceptor protein]-L-lysine = [E2 ubiquitin-conjugating enzyme]-L-cysteine + N(6)-ubiquitinyl-[acceptor protein]-L-lysine.. Its pathway is protein modification; protein ubiquitination. In terms of biological role, E3 ubiquitin-protein ligase that mediates E2-dependent, 'Lys-48'- and/or 'Lys-63'-linked polyubiquitination of substrates. Recognizes miRNA-empty Ago1 and triggers its degradation via polyubiquitination independently of the Bag6 complex. By targeting miRNA-empty Ago1, eliminates dysfunctional Ago1 not able to bind miRNA and thereby plays a role in the quality control of miRNA-mediated silencing. The polypeptide is E3 ubiquitin-protein ligase Iruka (Drosophila melanogaster (Fruit fly)).